The sequence spans 27 residues: Potassium channel toxin kappa-KTx 2.2 (27 aa).

Intrachain disulfides connect C3-C21 and C7-C17.

It belongs to the short scorpion toxin superfamily. Potassium channel inhibitor kappa-KTx family. Kappa-KTx 2 subfamily. In terms of tissue distribution, expressed by the venom gland.

The protein resides in the secreted. Functionally, omTx1 decreases the amplitude of the potassium current of the rat channels Kv1.1/KCNA1 by 17% and Kv1.2/KCNA2 by 12% as well as human Kv1.3/KCNA3 by 24%. In terms of biological role, omTx2 decreases the amplitude of the potassium current of the rat channels Kv1.1/KCNA1 by 8% and Kv1.2/KCNA2 by 10% as well as human Kv1.3/KCNA3 by 36%. Also alters glucose-induced insulin release from pancreatic islets. This Opisthacanthus madagascariensis (Scorpion) protein is Potassium channel toxin kappa-KTx 2.2.